The chain runs to 448 residues: Tryptophan dimethylallyltransferase 2 (448 aa).

L-tryptophan contacts are provided by residues 80–81 (IL) and E89. 3 residues coordinate substrate: R100, K186, and Y188. Y190 and R249 together coordinate L-tryptophan. Residues R262, K264, Y266, Q348, Y350, Y414, and Y418 each contribute to the substrate site.

This sequence belongs to the tryptophan dimethylallyltransferase family. Homodimer.

It carries out the reaction L-tryptophan + dimethylallyl diphosphate = 4-(3-methylbut-2-enyl)-L-tryptophan + diphosphate. The protein operates within alkaloid biosynthesis; ergot alkaloid biosynthesis. In terms of biological role, catalyzes the first step of ergot alkaloid biosynthesis. Ergot alkaloids, which are produced by endophyte fungi, can enhance plant host fitness, but also cause livestock toxicosis to host plants. The polypeptide is Tryptophan dimethylallyltransferase 2 (dmaW2) (Claviceps purpurea (strain 20.1) (Ergot fungus)).